A 411-amino-acid chain; its full sequence is G2/mitotic-specific cyclin cig2 (411 aa).

Residues 51–60 carry the Destruction box motif; that stretch reads RTVLSDVSNV. The segment at 57–89 is disordered; sequence VSNVGKNNADEKDTKKAKRSFDESNLSTNEEAD. The span at 64–78 shows a compositional bias: basic and acidic residues; that stretch reads NADEKDTKKAKRSFD. One can recognise a Cyclin N-terminal domain in the interval 139 to 265; it reads EIFEYIRKLD…MLNVLNFDLS (127 aa). An interaction with pop1 region spans residues 181–273; sequence SNFCLMPETL…LSYPSPLNFL (93 aa).

Belongs to the cyclin family. Cyclin AB subfamily. In terms of assembly, associates with cdc2, res2 and rum1. Interacts with pop1 only when phosphorylated. Phosphorylated.

The protein localises to the nucleus. Its subcellular location is the cytoplasm. It localises to the cytoskeleton. It is found in the microtubule organizing center. The protein resides in the spindle pole body. Essential for the control of the cell cycle at the G2/M and G1/S (mitosis) transition. Interacts with the cdc2 protein kinase to form MPF. Interaction with res2 promotes the phosphorylation of res1 and inhibits MBF-dependent gene transcription. Forms an autoregulating feedback-inhibition loop with MBF which is important for normal regulation of the cell cycle. G2/M cyclins accumulate steadily during G2 and are abruptly destroyed at mitosis. Negatively regulates conjugation via interacting with cell cycle 'start' genes. Degraded by skp1, pop1 and pop2 in the G2 and M phases of the cell cycle. This chain is G2/mitotic-specific cyclin cig2 (cig2), found in Schizosaccharomyces pombe (strain 972 / ATCC 24843) (Fission yeast).